The primary structure comprises 287 residues: Undecaprenyl-diphosphatase (287 aa).

The next 7 helical transmembrane spans lie at 6–26 (LHLL…FIPV), 45–65 (SGKV…MWIF), 89–109 (NLLL…KSIK), 111–131 (VFYH…IMLW), 204–224 (ATEF…VYDL), 238–258 (AIAV…RAVL), and 266–286 (YRVF…WIYA).

It belongs to the UppP family.

It localises to the cell inner membrane. The enzyme catalyses di-trans,octa-cis-undecaprenyl diphosphate + H2O = di-trans,octa-cis-undecaprenyl phosphate + phosphate + H(+). Functionally, catalyzes the dephosphorylation of undecaprenyl diphosphate (UPP). Confers resistance to bacitracin. The protein is Undecaprenyl-diphosphatase of Bordetella pertussis (strain Tohama I / ATCC BAA-589 / NCTC 13251).